The primary structure comprises 182 residues: Glycoprotein Q2 (182 aa).

The signal sequence occupies residues 1-20; that stretch reads MHFVAVYILTHFHAYPGVAA. Asn-74 and Asn-110 each carry an N-linked (GlcNAc...) asparagine; by host glycan.

Interacts with isoform gQ2. The heterodimer gQ1-gQ2 associates with the glycoprotein complex gH-gL to form a tetrameric complex. The gH/gL/gQ1/gQ2 complex binds to host TNFRSF4. Post-translationally, glycosylated by host.

The protein localises to the virion membrane. The protein resides in the host endoplasmic reticulum-Golgi intermediate compartment. In terms of biological role, plays a role in virus entry by participating in host receptor binding at the cell surface. The protein is Glycoprotein Q2 of Human herpesvirus 6B (strain Z29) (HHV-6 variant B).